The primary structure comprises 505 residues: 2,3-bisphosphoglycerate-independent phosphoglycerate mutase (505 aa).

Residues aspartate 12 and serine 62 each contribute to the Mn(2+) site. Residue serine 62 is the Phosphoserine intermediate of the active site. Substrate is bound by residues histidine 123, 153-154 (RD), arginine 185, arginine 191, 257-260 (RPDR), and lysine 330. Mn(2+) contacts are provided by aspartate 397, histidine 401, aspartate 438, histidine 439, and histidine 456.

This sequence belongs to the BPG-independent phosphoglycerate mutase family. In terms of assembly, monomer. The cofactor is Mn(2+).

It carries out the reaction (2R)-2-phosphoglycerate = (2R)-3-phosphoglycerate. Its pathway is carbohydrate degradation; glycolysis; pyruvate from D-glyceraldehyde 3-phosphate: step 3/5. Its function is as follows. Catalyzes the interconversion of 2-phosphoglycerate and 3-phosphoglycerate. In Staphylococcus epidermidis (strain ATCC 35984 / DSM 28319 / BCRC 17069 / CCUG 31568 / BM 3577 / RP62A), this protein is 2,3-bisphosphoglycerate-independent phosphoglycerate mutase.